The chain runs to 107 residues: uncharacterized protein (107 aa).

3 helical membrane-spanning segments follow: residues 15-35 (TGSYNWFDHFFLCVYLALGIS), 43-63 (LYRVCFIFLFTGGFFLFWLSY), and 87-107 (YFPSSTWIAVLVFSWRHIFCF).

Its subcellular location is the membrane. This is an uncharacterized protein from Saccharomyces cerevisiae (strain ATCC 204508 / S288c) (Baker's yeast).